Consider the following 283-residue polypeptide: Nucleotide-binding protein ABBFA_002973 (283 aa).

9–16 contributes to the ATP binding site; that stretch reads GQSGSGKS. 59-62 lines the GTP pocket; the sequence is DVRS.

Belongs to the RapZ-like family.

Displays ATPase and GTPase activities. This chain is Nucleotide-binding protein ABBFA_002973, found in Acinetobacter baumannii (strain AB307-0294).